The following is a 1118-amino-acid chain: MKKASRSVGSVPKVPGVNKTQTTEKTKPESGSSLSAVTKLSKPGTSASLLKTKSNDDLLAGMASGGGVTMTNGVKAKKSTCASTVSSTTGTTMSTLENKPRTVAGSTARRSTSSGTKESSSSRERIRDRSRLSQSKKLPLAGQGSNDTVLAKRSRSRTNPESDIRMSKSKSDNQISDKAALEAKVNDLLTLAKTKDVEILHLRNELRDMRAQLGLNEDQVEGDEKSEEKEAIVVHQPTDVESTLLQLQEQNTAIREELNQLKNENRMLKDRLNALGFSLEQRLDNSEKLFGYQSLSPEITAGNHSDGGGTLTSSVEGSAPGSMEDLLSQDEHTLMDNQHSNSMDNLDSECSEVYQPLTSSDDALDAPSSSESEGVPSIERSRKGSSGNASEVSVACLTERIHQMEENQHSTAEELQATLQELADLQQITQELNSENERLGEEKVILMESLCQQSDKLEHFSRQIEYFRSLLDEHHISYVIDEDMKSGRYMELEQRYMDLAENARFEREQLLGVQQHLSNTLKMAEQDNKEAQEMIGALKERNHHMERIIESEQKSKTAIASTLEEYKATVASDQIEMNRLKAQLEHEKQKVAELYSIHNSGDKSDIQDLLESVRLDKEKAETLASSLQEELAHTRNDANRLQDAIAKVEDEYRVFQEEAKKQIEDLNVTLEKLRAELDEKETERSDMKETIFELEDEVEQHRAVKLHDNLIISDLENTVKKLQDQKHDMEREIKNLHRRLREESAEWRQFQADLQTAVVIANDIKSEAQEEIGDLKRRLHEAQEKNEKLTKELEEIKSRKQEEERGRVYNYMNAVERDLAALRQGMGLSRRSSTSSEPTPTVKTLIKSFDSASQVPSPAAATIPRTPLSPSPMKTPPAAAVSPMQRHSISGPISASKPLATLTDKRPSYAEIPVQEHLLRTSSTSRPASLPRVPAMESAKSISVSRRSSEEIKRDISAPDGASPASLMAMGTTSPQLSLSSSPTASVTPTTRSRIREERKDPLSALAREYGGSKRNALLKWCQKKTEGYQNIDITNFSSSWNDGLAFCAVLHTYLPAHIPYQELNSQDKRRNFTLAFQAAESVGIKSTLDINEMVRTERPDWQNVMLYVTAIYKYFET.

The tract at residues 1–176 (MKKASRSVGS…SKSKSDNQIS (176 aa)) is disordered. The span at 29 to 52 (ESGSSLSAVTKLSKPGTSASLLKT) shows a compositional bias: polar residues. Over residues 79–119 (STCASTVSSTTGTTMSTLENKPRTVAGSTARRSTSSGTKES) the composition is skewed to low complexity. Basic and acidic residues-rich tracts occupy residues 120–131 (SSSRERIRDRSR) and 158–171 (TNPE…KSKS). Positions 193 to 281 (KTKDVEILHL…LNALGFSLEQ (89 aa)) form a coiled coil. Disordered stretches follow at residues 299-324 (ITAG…GSME) and 359-391 (SSDD…NASE). Positions 359-373 (SSDDALDAPSSSESE) are enriched in low complexity. 2 coiled-coil regions span residues 396 to 450 (CLTE…MESL) and 488 to 808 (RYME…RGRV). 2 disordered regions span residues 856–879 (PSPA…PPAA) and 921–1002 (TSST…RKDP). Low complexity predominate over residues 937 to 946 (ESAKSISVSR). A compositionally biased stretch (basic and acidic residues) spans 947–957 (RSSEEIKRDIS). The span at 972-991 (TTSPQLSLSSSPTASVTPTT) shows a compositional bias: low complexity. The Calponin-homology (CH) domain maps to 1012 to 1117 (GSKRNALLKW…YVTAIYKYFE (106 aa)).

The protein belongs to the cytospin-A family. As to quaternary structure, may interact with both microtubules and actin cytoskeleton.

Its subcellular location is the cytoplasm. It localises to the cytoskeleton. The protein localises to the spindle. The protein resides in the cell junction. It is found in the gap junction. In terms of biological role, involved in cytokinesis and spindle organization. May play a role in actin cytoskeleton organization and microtubule stabilization and hence required for proper cell adhesion and migration. The sequence is that of Cytospin-A (SPECC1L) from Gallus gallus (Chicken).